A 708-amino-acid chain; its full sequence is Fatty acid oxidation complex subunit alpha (708 aa).

Residues 1–191 (MDNNNAFQLS…KLGVVDACVP (191 aa)) form an enoyl-CoA hydratase region. Residues 311-708 (APVAAVGVLG…RAGLGEKFYP (398 aa)) are 3-hydroxyacyl-CoA dehydrogenase.

This sequence in the N-terminal section; belongs to the enoyl-CoA hydratase/isomerase family. The protein in the central section; belongs to the 3-hydroxyacyl-CoA dehydrogenase family. Heterotetramer of two alpha chains (FadJ) and two beta chains (FadI).

The protein resides in the cytoplasm. It catalyses the reaction a (3S)-3-hydroxyacyl-CoA = a (2E)-enoyl-CoA + H2O. It carries out the reaction a 4-saturated-(3S)-3-hydroxyacyl-CoA = a (3E)-enoyl-CoA + H2O. The enzyme catalyses a (3S)-3-hydroxyacyl-CoA + NAD(+) = a 3-oxoacyl-CoA + NADH + H(+). The catalysed reaction is (3S)-3-hydroxybutanoyl-CoA = (3R)-3-hydroxybutanoyl-CoA. It functions in the pathway lipid metabolism; fatty acid beta-oxidation. Its function is as follows. Catalyzes the formation of a hydroxyacyl-CoA by addition of water on enoyl-CoA. Also exhibits 3-hydroxyacyl-CoA epimerase and 3-hydroxyacyl-CoA dehydrogenase activities. The protein is Fatty acid oxidation complex subunit alpha of Vibrio cholerae serotype O1 (strain ATCC 39315 / El Tor Inaba N16961).